A 381-amino-acid chain; its full sequence is L-lactate dehydrogenase (381 aa).

The 380-residue stretch at 1 to 380 (MIISASTDYR…TRDSLVRELG (380 aa)) folds into the FMN hydroxy acid dehydrogenase domain. Residue Y24 participates in substrate binding. FMN contacts are provided by S106 and Q127. Position 129 (Y129) interacts with substrate. T155 contributes to the FMN binding site. Residue R164 participates in substrate binding. K251 is a binding site for FMN. H275 acts as the Proton acceptor in catalysis. Position 278 (R278) interacts with substrate. Position 306–330 (306–330 (DSGIRSGLDVVRMIALGADTVLIGR)) interacts with FMN.

The protein belongs to the FMN-dependent alpha-hydroxy acid dehydrogenase family. Homotetramer. FMN is required as a cofactor.

It is found in the cell inner membrane. The catalysed reaction is (S)-lactate + A = pyruvate + AH2. Functionally, catalyzes the conversion of L-lactate to pyruvate. Is coupled to the respiratory chain. In Pseudomonas putida (strain ATCC 700007 / DSM 6899 / JCM 31910 / BCRC 17059 / LMG 24140 / F1), this protein is L-lactate dehydrogenase.